The following is a 334-amino-acid chain: GTP 3',8-cyclase (334 aa).

In terms of domain architecture, Radical SAM core spans 11-236 (GFNRKIDYLR…ESTESSQGPA (226 aa)). Position 20 (arginine 20) interacts with GTP. [4Fe-4S] cluster is bound by residues cysteine 27 and cysteine 31. S-adenosyl-L-methionine is bound at residue tyrosine 33. Cysteine 34 provides a ligand contact to [4Fe-4S] cluster. Arginine 69 is a binding site for GTP. Glycine 73 serves as a coordination point for S-adenosyl-L-methionine. Residue threonine 100 coordinates GTP. S-adenosyl-L-methionine is bound at residue serine 124. Residue lysine 161 participates in GTP binding. Residue methionine 195 coordinates S-adenosyl-L-methionine. [4Fe-4S] cluster is bound by residues cysteine 260 and cysteine 263. A GTP-binding site is contributed by 265-267 (RVR). Cysteine 277 is a [4Fe-4S] cluster binding site.

This sequence belongs to the radical SAM superfamily. MoaA family. Monomer and homodimer. [4Fe-4S] cluster serves as cofactor.

It catalyses the reaction GTP + AH2 + S-adenosyl-L-methionine = (8S)-3',8-cyclo-7,8-dihydroguanosine 5'-triphosphate + 5'-deoxyadenosine + L-methionine + A + H(+). It participates in cofactor biosynthesis; molybdopterin biosynthesis. In terms of biological role, catalyzes the cyclization of GTP to (8S)-3',8-cyclo-7,8-dihydroguanosine 5'-triphosphate. In Pseudomonas putida (strain W619), this protein is GTP 3',8-cyclase.